The chain runs to 351 residues: Biotin synthase (351 aa).

Residues 73–298 form the Radical SAM core domain; that stretch reads PEVEVEGIIS…RTILRYSGGR (226 aa). [4Fe-4S] cluster-binding residues include C88, C92, and C95. The [2Fe-2S] cluster site is built by C131, C164, C223, and R293.

It belongs to the radical SAM superfamily. Biotin synthase family. In terms of assembly, homodimer. [4Fe-4S] cluster is required as a cofactor. The cofactor is [2Fe-2S] cluster.

The catalysed reaction is (4R,5S)-dethiobiotin + (sulfur carrier)-SH + 2 reduced [2Fe-2S]-[ferredoxin] + 2 S-adenosyl-L-methionine = (sulfur carrier)-H + biotin + 2 5'-deoxyadenosine + 2 L-methionine + 2 oxidized [2Fe-2S]-[ferredoxin]. Its pathway is cofactor biosynthesis; biotin biosynthesis; biotin from 7,8-diaminononanoate: step 2/2. Its function is as follows. Catalyzes the conversion of dethiobiotin (DTB) to biotin by the insertion of a sulfur atom into dethiobiotin via a radical-based mechanism. This is Biotin synthase from Frankia alni (strain DSM 45986 / CECT 9034 / ACN14a).